We begin with the raw amino-acid sequence, 130 residues long: Small ribosomal subunit protein uS9 (130 aa).

Belongs to the universal ribosomal protein uS9 family.

This chain is Small ribosomal subunit protein uS9, found in Shigella dysenteriae serotype 1 (strain Sd197).